Here is a 305-residue protein sequence, read N- to C-terminus: MQRSNHTVTEFILLGFTTDPGMQLGLFVVFLGVYSLTVVGNSTLIVLICNDSCLHTPMYFFTGNLSFLDLWYSSVYTPKILVTCISEDKSISFAGCLCQFFFSAGLAYSECYLLAAVAYDRYVAISKPLLYAQAMSIKLCALLVAVSYCGGFINSSIITKKTFSFNFCRENIIDDFFCDLLPLVELACGEKGGYKIMMYFLLASNVICPAVLILASYLFIITSVLRISSSKGYLKAFSTCSSHLTSVTLYYGSILYIYALPRSSYSFDMDKIVSTFYTVVFPMLNLMIYSLRNKDVKEALKKLLP.

Residues 1–24 (MQRSNHTVTEFILLGFTTDPGMQL) lie on the Extracellular side of the membrane. Asn5 carries N-linked (GlcNAc...) asparagine glycosylation. Residues 25–45 (GLFVVFLGVYSLTVVGNSTLI) traverse the membrane as a helical segment. The Cytoplasmic segment spans residues 46–53 (VLICNDSC). The helical transmembrane segment at 54-74 (LHTPMYFFTGNLSFLDLWYSS) threads the bilayer. The Extracellular segment spans residues 75–98 (VYTPKILVTCISEDKSISFAGCLC). Cys96 and Cys188 are joined by a disulfide. Residues 99 to 119 (QFFFSAGLAYSECYLLAAVAY) traverse the membrane as a helical segment. Residues 120–138 (DRYVAISKPLLYAQAMSIK) are Cytoplasmic-facing. The chain crosses the membrane as a helical span at residues 139-159 (LCALLVAVSYCGGFINSSIIT). Residues 160–196 (KKTFSFNFCRENIIDDFFCDLLPLVELACGEKGGYKI) are Extracellular-facing. The chain crosses the membrane as a helical span at residues 197 to 216 (MMYFLLASNVICPAVLILAS). At 217–236 (YLFIITSVLRISSSKGYLKA) the chain is on the cytoplasmic side. Residues 237 to 257 (FSTCSSHLTSVTLYYGSILYI) form a helical membrane-spanning segment. Topologically, residues 258–270 (YALPRSSYSFDMD) are extracellular. The helical transmembrane segment at 271–291 (KIVSTFYTVVFPMLNLMIYSL) threads the bilayer. Residues 292–305 (RNKDVKEALKKLLP) lie on the Cytoplasmic side of the membrane.

Belongs to the G-protein coupled receptor 1 family.

It localises to the cell membrane. Odorant receptor. In Homo sapiens (Human), this protein is Olfactory receptor 9G1 (OR9G1).